A 134-amino-acid chain; its full sequence is SNAPIN protein homolog (134 aa).

Positions 50-124 (QLQAELRGQL…EKEQRRRQAL (75 aa)) form a coiled coil.

It belongs to the SNAPIN family. Component of the biogenesis of lysosome-related organelles complex-1 (BLOC-1) composed of Blos1, Blos2, Blos3, Blos4, Dysb, Muted, Pldn and Snapin. Interacts with Blos2 and Dysb.

It is found in the membrane. It localises to the cytoplasm. The protein localises to the cytosol. Component of the biogenesis of lysosome-related organelles complex-1 (BLOC-1) involved in pigment granule biogenesis. May participate in the coupling of lysosomes to microtubule plus-end-directed kinesin motor. This is SNAPIN protein homolog from Drosophila melanogaster (Fruit fly).